Here is a 148-residue protein sequence, read N- to C-terminus: uncharacterized protein (148 aa).

Helical transmembrane passes span 16 to 36 and 41 to 61; these read IVGAVIFSMSIIVILYISIIL and LSFSIILAVDILIIALFAYIF.

It to M.jannaschii MJ0696.

The protein localises to the cell membrane. This is an uncharacterized protein from Methanocaldococcus jannaschii (strain ATCC 43067 / DSM 2661 / JAL-1 / JCM 10045 / NBRC 100440) (Methanococcus jannaschii).